We begin with the raw amino-acid sequence, 750 residues long: Photosystem I P700 chlorophyll a apoprotein A1 (750 aa).

Helical transmembrane passes span 70–93 (VFSA…FHGA), 156–179 (LYCT…FHYH), 195–219 (LNHH…HVSL), 291–309 (IAHH…GHMY), 346–369 (WHAQ…HHMY), 385–411 (LSLF…IFMV), 433–455 (AIIS…LYIH), and 531–549 (FLVH…LILL). Positions 573 and 582 each coordinate [4Fe-4S] cluster. Helical transmembrane passes span 589-610 (HVFL…HFSW) and 664-686 (LSAY…MFLF). Histidine 675 is a binding site for chlorophyll a'. Chlorophyll a-binding residues include methionine 683 and tyrosine 691. Tryptophan 692 is a binding site for phylloquinone. Residues 724–744 (AVGVTHYLLGGIATTWAFFLA) traverse the membrane as a helical segment.

Belongs to the PsaA/PsaB family. In terms of assembly, the PsaA/B heterodimer binds the P700 chlorophyll special pair and subsequent electron acceptors. PSI consists of a core antenna complex that captures photons, and an electron transfer chain that converts photonic excitation into a charge separation. The eukaryotic PSI reaction center is composed of at least 11 subunits. Requires P700 is a chlorophyll a/chlorophyll a' dimer, A0 is one or more chlorophyll a, A1 is one or both phylloquinones and FX is a shared 4Fe-4S iron-sulfur center. as cofactor.

The protein resides in the plastid. It localises to the chloroplast thylakoid membrane. It carries out the reaction reduced [plastocyanin] + hnu + oxidized [2Fe-2S]-[ferredoxin] = oxidized [plastocyanin] + reduced [2Fe-2S]-[ferredoxin]. Its function is as follows. PsaA and PsaB bind P700, the primary electron donor of photosystem I (PSI), as well as the electron acceptors A0, A1 and FX. PSI is a plastocyanin-ferredoxin oxidoreductase, converting photonic excitation into a charge separation, which transfers an electron from the donor P700 chlorophyll pair to the spectroscopically characterized acceptors A0, A1, FX, FA and FB in turn. Oxidized P700 is reduced on the lumenal side of the thylakoid membrane by plastocyanin. The sequence is that of Photosystem I P700 chlorophyll a apoprotein A1 from Aethionema cordifolium (Lebanon stonecress).